The following is a 660-amino-acid chain: Replication restart protein PriA (660 aa).

One can recognise a Helicase ATP-binding domain in the interval 145–313; it reads IIGSEKTNVF…KNNQIKKIIM (169 aa). 158–165 lines the ATP pocket; sequence GIPGSGKT. The DEAH box motif lies at 256 to 259; that stretch reads DEEH. 8 residues coordinate Zn(2+): cysteine 370, cysteine 373, cysteine 379, cysteine 382, cysteine 397, cysteine 400, cysteine 410, and cysteine 413. The Helicase C-terminal domain maps to 405-557; the sequence is KTASHCPQCE…QFYEEELDIR (153 aa).

Belongs to the helicase family. PriA subfamily. Component of the replication restart primosome. It depends on Zn(2+) as a cofactor.

The enzyme catalyses Couples ATP hydrolysis with the unwinding of duplex DNA by translocating in the 3'-5' direction.. It catalyses the reaction ATP + H2O = ADP + phosphate + H(+). Functionally, initiates the restart of stalled replication forks, which reloads the replicative helicase on sites other than the origin of replication. Recognizes and binds to abandoned replication forks and remodels them to uncover a helicase loading site. Promotes assembly of the primosome at these replication forks. In Borreliella burgdorferi (strain ATCC 35210 / DSM 4680 / CIP 102532 / B31) (Borrelia burgdorferi), this protein is Replication restart protein PriA.